A 556-amino-acid polypeptide reads, in one-letter code: 2-succinyl-5-enolpyruvyl-6-hydroxy-3-cyclohexene-1-carboxylate synthase (556 aa).

It belongs to the TPP enzyme family. MenD subfamily. In terms of assembly, homodimer. It depends on Mg(2+) as a cofactor. Requires Mn(2+) as cofactor. Thiamine diphosphate serves as cofactor.

The enzyme catalyses isochorismate + 2-oxoglutarate + H(+) = 5-enolpyruvoyl-6-hydroxy-2-succinyl-cyclohex-3-ene-1-carboxylate + CO2. Its pathway is quinol/quinone metabolism; 1,4-dihydroxy-2-naphthoate biosynthesis; 1,4-dihydroxy-2-naphthoate from chorismate: step 2/7. It functions in the pathway quinol/quinone metabolism; menaquinone biosynthesis. Functionally, catalyzes the thiamine diphosphate-dependent decarboxylation of 2-oxoglutarate and the subsequent addition of the resulting succinic semialdehyde-thiamine pyrophosphate anion to isochorismate to yield 2-succinyl-5-enolpyruvyl-6-hydroxy-3-cyclohexene-1-carboxylate (SEPHCHC). This is 2-succinyl-5-enolpyruvyl-6-hydroxy-3-cyclohexene-1-carboxylate synthase from Escherichia coli O7:K1 (strain IAI39 / ExPEC).